A 424-amino-acid polypeptide reads, in one-letter code: Riboflavin biosynthesis protein RibBA (424 aa).

The segment at 1-204 (MTRFDSIERA…IADLIAWRRK (204 aa)) is DHBP synthase. Residues 28-29 (RE), D33, 141-145 (RPGHT), and E165 contribute to the D-ribulose 5-phosphate site. E29 lines the Mg(2+) pocket. Mg(2+) is bound at residue H144. The segment at 205–424 (HEKHVLRIAE…QNTAQPGTAL (220 aa)) is GTP cyclohydrolase II. 259-263 (RVHSE) contacts GTP. The Zn(2+) site is built by C264, C275, and C277. GTP contacts are provided by residues Q280, 303 to 305 (EGR), and T325. D337 serves as the catalytic Proton acceptor; for GTP cyclohydrolase activity. The active-site Nucleophile; for GTP cyclohydrolase activity is R339. T360 and K365 together coordinate GTP.

In the N-terminal section; belongs to the DHBP synthase family. It in the C-terminal section; belongs to the GTP cyclohydrolase II family. The cofactor is Mg(2+). Mn(2+) serves as cofactor. Requires Zn(2+) as cofactor.

It carries out the reaction D-ribulose 5-phosphate = (2S)-2-hydroxy-3-oxobutyl phosphate + formate + H(+). It catalyses the reaction GTP + 4 H2O = 2,5-diamino-6-hydroxy-4-(5-phosphoribosylamino)-pyrimidine + formate + 2 phosphate + 3 H(+). It functions in the pathway cofactor biosynthesis; riboflavin biosynthesis; 2-hydroxy-3-oxobutyl phosphate from D-ribulose 5-phosphate: step 1/1. It participates in cofactor biosynthesis; riboflavin biosynthesis; 5-amino-6-(D-ribitylamino)uracil from GTP: step 1/4. Catalyzes the conversion of D-ribulose 5-phosphate to formate and 3,4-dihydroxy-2-butanone 4-phosphate. Functionally, catalyzes the conversion of GTP to 2,5-diamino-6-ribosylamino-4(3H)-pyrimidinone 5'-phosphate (DARP), formate and pyrophosphate. The chain is Riboflavin biosynthesis protein RibBA from Rhodococcus erythropolis (strain PR4 / NBRC 100887).